An 892-amino-acid polypeptide reads, in one-letter code: Smad protein daf-3 (892 aa).

Disordered stretches follow at residues 1–43 and 135–161; these read MGDH…GLED and PYLD…FDTK. Over residues 15 to 26 the composition is skewed to polar residues; that stretch reads IPPQFNYSQPGT. In terms of domain architecture, MH1 spans 198–347; sequence KIVEYLMYYR…YEIVIGTMIV (150 aa). Residues 505 to 552 are disordered; that stretch reads YPDFHHPFNQQPHQPPQLSQNHTSQQGSHQPGHQGQVPNDPPISRPVL. Residues 528–540 are compositionally biased toward low complexity; the sequence is SQQGSHQPGHQGQ. In terms of domain architecture, MH2 spans 657–880; it reads WGTIVYYEKN…TNCFEPLGME (224 aa).

Belongs to the dwarfin/SMAD family. As to quaternary structure, interacts with R-SMADs daf-8 and daf-14. Interacts with daf-14 in a daf-8 dependent manner. May interact with daf-5.

Its subcellular location is the cytoplasm. The protein resides in the nucleus. It localises to the chromosome. In terms of biological role, transcriptional regulator and common SMAD (co-SMAD), required to regulate entry into a developmentally arrested larval state known as dauer, in response to harsh environmental conditions. Probable component of transcriptional regulatory complex with SMAD protein daf-5. Acts antagonistically to SMAD signaling downstream of TGF-beta-like daf-7 signaling. Binds to the 5'-GTCTG-3' motif found in regulatory regions and may modulate the expression of genes involved in TGF-beta-like daf-7 and Notch lag-2 signaling. May regulate gene expression outside the dauer pathway. This Caenorhabditis elegans protein is Smad protein daf-3.